The following is a 250-amino-acid chain: Ubiquinone/menaquinone biosynthesis C-methyltransferase UbiE (250 aa).

Residues Ser73, Asp94, and 122 to 123 (NA) contribute to the S-adenosyl-L-methionine site.

The protein belongs to the class I-like SAM-binding methyltransferase superfamily. MenG/UbiE family.

The catalysed reaction is a 2-demethylmenaquinol + S-adenosyl-L-methionine = a menaquinol + S-adenosyl-L-homocysteine + H(+). It catalyses the reaction a 2-methoxy-6-(all-trans-polyprenyl)benzene-1,4-diol + S-adenosyl-L-methionine = a 5-methoxy-2-methyl-3-(all-trans-polyprenyl)benzene-1,4-diol + S-adenosyl-L-homocysteine + H(+). It participates in quinol/quinone metabolism; menaquinone biosynthesis; menaquinol from 1,4-dihydroxy-2-naphthoate: step 2/2. Its pathway is cofactor biosynthesis; ubiquinone biosynthesis. In terms of biological role, methyltransferase required for the conversion of demethylmenaquinol (DMKH2) to menaquinol (MKH2) and the conversion of 2-polyprenyl-6-methoxy-1,4-benzoquinol (DDMQH2) to 2-polyprenyl-3-methyl-6-methoxy-1,4-benzoquinol (DMQH2). This Legionella pneumophila (strain Lens) protein is Ubiquinone/menaquinone biosynthesis C-methyltransferase UbiE.